Here is a 662-residue protein sequence, read N- to C-terminus: Histidine decarboxylase (662 aa).

Positions 88 and 201 each coordinate substrate. N6-(pyridoxal phosphate)lysine is present on K312. The segment at 489-518 is disordered; the sequence is QPSPRAKNVIPPPPGTRGLSLESVSEGGDD.

This sequence belongs to the group II decarboxylase family. As to quaternary structure, homodimer. Pyridoxal 5'-phosphate serves as cofactor.

It catalyses the reaction L-histidine + H(+) = histamine + CO2. The protein operates within amine and polyamine biosynthesis; histamine biosynthesis; histamine from L-histidine: step 1/1. Catalyzes the biosynthesis of histamine from histidine. In Mus musculus (Mouse), this protein is Histidine decarboxylase (Hdc).